Reading from the N-terminus, the 390-residue chain is S-adenosylmethionine synthase (390 aa).

Glutamate 12 contributes to the Mg(2+) binding site. Residue histidine 18 participates in ATP binding. Glutamate 46 is a K(+) binding site. Residues glutamate 59 and glutamine 102 each contribute to the L-methionine site. Residues 170–172, 238–241, aspartate 249, 255–256, alanine 272, lysine 276, and lysine 280 contribute to the ATP site; these read DGK, SGRF, and RK. Aspartate 249 provides a ligand contact to L-methionine. An L-methionine-binding site is contributed by lysine 280.

This sequence belongs to the AdoMet synthase family. In terms of assembly, homotetramer. Mn(2+) is required as a cofactor. Requires Mg(2+) as cofactor. The cofactor is Co(2+). It depends on K(+) as a cofactor.

The protein localises to the cytoplasm. The enzyme catalyses L-methionine + ATP + H2O = S-adenosyl-L-methionine + phosphate + diphosphate. Its pathway is amino-acid biosynthesis; S-adenosyl-L-methionine biosynthesis; S-adenosyl-L-methionine from L-methionine: step 1/1. Catalyzes the formation of S-adenosylmethionine from methionine and ATP. The reaction comprises two steps that are both catalyzed by the same enzyme: formation of S-adenosylmethionine (AdoMet) and triphosphate, and subsequent hydrolysis of the triphosphate. This Chlamydomonas reinhardtii (Chlamydomonas smithii) protein is S-adenosylmethionine synthase (METM).